The primary structure comprises 443 residues: MSAIVAANSPRVGFVSLGCPKALVDSERILTQLRVEGYEIVGGYEEADVVVVNTCAFIEAAQAESLDAIGEALDENGKVVVTGCLGTKGDLIRETHPGVLAITGPQDYEAVMAAVHAQCPPPARDAFTGLLPASGVKLTPRHYAYLKISEGCNHHCTFCIIPQLRGRLVSRPVDQVLAEAERLVGDGVRELLVISQDTSAYGVDTRYAAAEWRGVPRRTRMTELADALAELGVWVRLHYVYPYPHVDELIPLMAEGRIAPYLDMPLQHASPRILKAMRRPAGGEAVLERIRRWRQRCPDLTLRSTFIVGFPGETEDDFQVLLEFLEAAELDRVGCFTYSPVEGAAANALADPVPEAIAEQRQARLMALQAEISARRLARRVGTECTVLLDAVDGDAAVGRSQLEAPEVDGVIHLRGAEGCAPGQWVPARLEDADEHDLYGRVL.

The MTTase N-terminal domain occupies 10-120 (PRVGFVSLGC…VMAAVHAQCP (111 aa)). [4Fe-4S] cluster-binding residues include cysteine 19, cysteine 55, cysteine 84, cysteine 152, cysteine 156, and cysteine 159. The Radical SAM core domain occupies 138–375 (LTPRHYAYLK…MALQAEISAR (238 aa)). Residues 378-443 (ARRVGTECTV…DEHDLYGRVL (66 aa)) enclose the TRAM domain.

Belongs to the methylthiotransferase family. RimO subfamily. [4Fe-4S] cluster serves as cofactor.

It localises to the cytoplasm. The enzyme catalyses L-aspartate(89)-[ribosomal protein uS12]-hydrogen + (sulfur carrier)-SH + AH2 + 2 S-adenosyl-L-methionine = 3-methylsulfanyl-L-aspartate(89)-[ribosomal protein uS12]-hydrogen + (sulfur carrier)-H + 5'-deoxyadenosine + L-methionine + A + S-adenosyl-L-homocysteine + 2 H(+). In terms of biological role, catalyzes the methylthiolation of an aspartic acid residue of ribosomal protein uS12. The chain is Ribosomal protein uS12 methylthiotransferase RimO from Alkalilimnicola ehrlichii (strain ATCC BAA-1101 / DSM 17681 / MLHE-1).